The chain runs to 352 residues: Anthranilate phosphoribosyltransferase (352 aa).

Residues Gly-82, 85–86 (GD), Ser-90, 92–95 (NIST), 110–118 (KHGNRAVTG), and Gly-122 each bind 5-phospho-alpha-D-ribose 1-diphosphate. Gly-82 provides a ligand contact to anthranilate. A Mg(2+)-binding site is contributed by Ser-94. Asn-113 contributes to the anthranilate binding site. Residue Arg-168 coordinates anthranilate. 2 residues coordinate Mg(2+): Asp-232 and Glu-233.

Belongs to the anthranilate phosphoribosyltransferase family. Homodimer. The cofactor is Mg(2+).

It carries out the reaction N-(5-phospho-beta-D-ribosyl)anthranilate + diphosphate = 5-phospho-alpha-D-ribose 1-diphosphate + anthranilate. It participates in amino-acid biosynthesis; L-tryptophan biosynthesis; L-tryptophan from chorismate: step 2/5. In terms of biological role, catalyzes the transfer of the phosphoribosyl group of 5-phosphorylribose-1-pyrophosphate (PRPP) to anthranilate to yield N-(5'-phosphoribosyl)-anthranilate (PRA). The chain is Anthranilate phosphoribosyltransferase from Methanothermobacter thermautotrophicus (strain ATCC 29096 / DSM 1053 / JCM 10044 / NBRC 100330 / Delta H) (Methanobacterium thermoautotrophicum).